Here is a 120-residue protein sequence, read N- to C-terminus: MGCVRNKIVKRAARTIAEKYFQRLDSTFDHNLLVVQDVAVVQSKKLKNEIAGYLTSLYKKILKGTYNKVYIKSHEEERERKENVIPKESMLDVDCVEVDDVTMEMIKRYGYEGNFKVYGM.

It belongs to the eukaryotic ribosomal protein eS17 family. In terms of assembly, component of the small ribosomal subunit.

The protein localises to the cytoplasm. The polypeptide is Small ribosomal subunit protein eS17 (RPS17) (Encephalitozoon cuniculi (strain GB-M1) (Microsporidian parasite)).